Here is a 469-residue protein sequence, read N- to C-terminus: uncharacterized protein (469 aa).

An N-terminal signal peptide occupies residues 1–19 (MRINFVLLITLILPWFVSG). Transmembrane regions (helical) follow at residues 199–219 (IKST…TWLL), 236–256 (AFWV…MVAI), 283–303 (AYTS…PALV), 305–325 (YYVY…FAPL), 338–358 (ILLK…PFFA), 386–406 (IALA…RPLL), and 413–433 (GFQL…AFLF).

Its subcellular location is the membrane. This is an uncharacterized protein from Schizosaccharomyces pombe (strain 972 / ATCC 24843) (Fission yeast).